We begin with the raw amino-acid sequence, 383 residues long: Micronemal protein 3 (383 aa).

The signal sequence occupies residues 1–26; the sequence is MRGGTSALLHALTFSGAVWMCTPAEA. Residues 27 to 66 constitute a propeptide, required for proper sorting to micronemes; that stretch reads LPIQKSVQLGSFDKVVPSREVVSESLAPSFAVTETHSSVQ. Residues 67 to 145 are lectin-like; required for the binding of host cells; that stretch reads SPSKQETQLC…HPDKSYGGDC (79 aa). 3 required for proper sorting to micronemes regions span residues 146-189, 190-236, and 237-290; these read SCEK…SEDP, CSKR…KRTG, and CHAF…LAEK. The region spanning 186–227 is the EGF-like domain; that stretch reads SEDPCSKRGNAKCGPNGTCIVVDSVSYTCTCGDGETLVNLPE. Cystine bridges form between Cys-190/Cys-204 and Cys-198/Cys-214. An N-linked (GlcNAc...) asparagine glycan is attached at Asn-201. The tract at residues 294 to 359 is involved in dimerization; it reads EFGISASSCK…HTVTCEKIKH (66 aa).

In terms of assembly, homodimer; dimerization is likely required for host cell binding but not for trafficking to micronemes. In terms of processing, removal of the propeptide occurs in a post-medial-Golgi compartment. Removal of the propeptide is required for the host cell binding. The presence of propeptide does not affect dimerization. The presence of propeptide does not affect sorting to micronemes.

Its subcellular location is the cytoplasmic vesicle. It localises to the secretory vesicle. It is found in the microneme. The protein resides in the secreted. The protein localises to the golgi apparatus. Its subcellular location is the endoplasmic reticulum. Its function is as follows. Adhesin; can bind both the host cells and the parasites. May be involved in parasite invasion by acting as a bridge between the parasite and the host cell. Triggers innate immune responses in mouse macrophages via the TLR11/MyD88/NF-kappa-B pathway. Induces TNF/TNF-alpha secretion in mouse macrophages. Induces secretion of IL6 in mouse and human macrophages likely via different mechanisms. Up-regulates expression of NOS2/iNOS in mouse macrophages. Induces mouse macrophage polarization. The chain is Micronemal protein 3 from Toxoplasma gondii.